The following is a 187-amino-acid chain: Elongation factor P (187 aa).

Belongs to the elongation factor P family.

Its subcellular location is the cytoplasm. Its pathway is protein biosynthesis; polypeptide chain elongation. Functionally, involved in peptide bond synthesis. Stimulates efficient translation and peptide-bond synthesis on native or reconstituted 70S ribosomes in vitro. Probably functions indirectly by altering the affinity of the ribosome for aminoacyl-tRNA, thus increasing their reactivity as acceptors for peptidyl transferase. The chain is Elongation factor P from Roseiflexus castenholzii (strain DSM 13941 / HLO8).